Here is a 342-residue protein sequence, read N- to C-terminus: Ribosomal RNA small subunit methyltransferase C (342 aa).

It belongs to the methyltransferase superfamily. RsmC family. Monomer.

The protein resides in the cytoplasm. It catalyses the reaction guanosine(1207) in 16S rRNA + S-adenosyl-L-methionine = N(2)-methylguanosine(1207) in 16S rRNA + S-adenosyl-L-homocysteine + H(+). Its function is as follows. Specifically methylates the guanine in position 1207 of 16S rRNA in the 30S particle. This chain is Ribosomal RNA small subunit methyltransferase C, found in Klebsiella pneumoniae subsp. pneumoniae (strain ATCC 700721 / MGH 78578).